The sequence spans 304 residues: Mitochondrial RNA-splicing protein MRS4 (304 aa).

Solcar repeat units follow at residues 21–108, 118–200, and 207–300; these read APLH…CKAR, HQPM…ASKF, and YNPL…AKHF. Helical transmembrane passes span 23–41, 83–102, 120–139, 175–194, 209–228, and 275–288; these read LHSQ…HSLM, GVQS…FGTY, PMKT…ALMN, SYPT…FMIY, PLIH…ALTT, and GLKP…PATA.

It belongs to the mitochondrial carrier (TC 2.A.29) family.

It localises to the mitochondrion inner membrane. MRS4 suppresses a mitochondrial splice defect in the first intron of the COB gene. It may act as a carrier, exerting its suppressor activity via modulation of solute concentrations in the mitochondrion (possibly of cations). Not essential. The polypeptide is Mitochondrial RNA-splicing protein MRS4 (MRS4) (Saccharomyces cerevisiae (strain ATCC 204508 / S288c) (Baker's yeast)).